Consider the following 259-residue polypeptide: Ubiquitin-conjugating enzyme E2 J2 (259 aa).

Residues Met-1–His-226 are Cytoplasmic-facing. Positions Thr-12–Glu-162 constitute a UBC core domain. Cys-94 (glycyl thioester intermediate) is an active-site residue. A helical; Anchor for type IV membrane protein membrane pass occupies residues Gly-227–Tyr-247. Residues Thr-248–Glu-259 are Lumenal-facing.

This sequence belongs to the ubiquitin-conjugating enzyme family. In terms of assembly, interacts with murid herpesvirus 4 protein K3 (mK3).

It localises to the endoplasmic reticulum membrane. It catalyses the reaction S-ubiquitinyl-[E1 ubiquitin-activating enzyme]-L-cysteine + [E2 ubiquitin-conjugating enzyme]-L-cysteine = [E1 ubiquitin-activating enzyme]-L-cysteine + S-ubiquitinyl-[E2 ubiquitin-conjugating enzyme]-L-cysteine.. The protein operates within protein modification; protein ubiquitination. Its function is as follows. Catalyzes the covalent attachment of ubiquitin to other proteins. Seems to function in the selective degradation of misfolded membrane proteins from the endoplasmic reticulum (ERAD). In cooperation with the GATOR2 complex, catalyzes 'Lys-6'-linked ubiquitination of NPRL2. In terms of biological role, in case of infection by the murid herpesvirus 4, its association with the viral E3 ligase K3 mediates ubiquitination of host surface class I (MHC-I) H-2D(b)/H2-D1 and H-2K(b)/H2-K1 molecules before they exit the endoplasmic reticulum, leading to their degradation by the ERAD system, thus blocking the immune detection of virus-infected cells. The complex formed with the murid herpesvirus 4 protein K3 mediates ubiquitination of lysine, as well as serine and threonine residues present in the cytoplasmic tail of surface class I molecules and promotes ubiquitination of hydroxylated serine or threonine residues via ester bonds instead of the classical isopeptide linkage. In Mus musculus (Mouse), this protein is Ubiquitin-conjugating enzyme E2 J2 (Ube2j2).